The primary structure comprises 299 residues: dTDP-4-dehydrorhamnose reductase (299 aa).

NADH is bound by residues 10–12, Asp-30, 39–40, and 63–65; these read GQV, DF, and AHT. 11-12 is an NADPH binding site; that stretch reads QV. NADPH contacts are provided by residues 39–40, 63–65, and Tyr-102; these read DF and AHT. A dTDP-beta-L-rhamnose-binding site is contributed by 104 to 105; it reads TD. Positions 128 and 132 each coordinate NADH. Positions 128 and 132 each coordinate NADPH. The Proton donor/acceptor role is filled by Tyr-128. Trp-153 provides a ligand contact to dTDP-beta-L-rhamnose.

Belongs to the dTDP-4-dehydrorhamnose reductase family. In terms of assembly, homodimer. Mg(2+) serves as cofactor.

The catalysed reaction is dTDP-beta-L-rhamnose + NADP(+) = dTDP-4-dehydro-beta-L-rhamnose + NADPH + H(+). It functions in the pathway carbohydrate biosynthesis; dTDP-L-rhamnose biosynthesis. The protein operates within bacterial outer membrane biogenesis; LPS O-antigen biosynthesis. Its function is as follows. Involved in the biosynthesis of the dTDP-L-rhamnose which is an important component of lipopolysaccharide (LPS). Catalyzes the reduction of dTDP-6-deoxy-L-lyxo-4-hexulose to yield dTDP-L-rhamnose. RmlD uses NADH and NADPH nearly equally well. This chain is dTDP-4-dehydrorhamnose reductase, found in Shigella flexneri.